A 282-amino-acid chain; its full sequence is Phosphate import ATP-binding protein PstB (282 aa).

The ABC transporter domain maps to 36–277 (IEVKNLNFFY…PARKETEDYI (242 aa)). 68–75 (GPSGCGKS) is a binding site for ATP.

Belongs to the ABC transporter superfamily. Phosphate importer (TC 3.A.1.7) family. As to quaternary structure, the complex is composed of two ATP-binding proteins (PstB), two transmembrane proteins (PstC and PstA) and a solute-binding protein (PstS).

Its subcellular location is the cell inner membrane. It carries out the reaction phosphate(out) + ATP + H2O = ADP + 2 phosphate(in) + H(+). In terms of biological role, part of the ABC transporter complex PstSACB involved in phosphate import. Responsible for energy coupling to the transport system. This Burkholderia pseudomallei (strain 1710b) protein is Phosphate import ATP-binding protein PstB.